The chain runs to 464 residues: Chromosomal replication initiator protein DnaA (464 aa).

Positions 1–90 (MNNDNTEVLE…KYWQDEDQSI (90 aa)) are domain I, interacts with DnaA modulators. Residues 90–126 (ICSVDICVVSNQDPNLLVDIKDRVDRGIKGNCDNVSS) form a domain II region. Residues 127–345 (PLDPRFTFDN…GALNKVVAHS (219 aa)) form a domain III, AAA+ region region. 4 residues coordinate ATP: Gly-173, Gly-175, Lys-176, and Thr-177. The interval 346–464 (SLVGCSITLD…DINLLNRMLR (119 aa)) is domain IV, binds dsDNA.

Belongs to the DnaA family. Oligomerizes as a right-handed, spiral filament on DNA at oriC.

The protein localises to the cytoplasm. In terms of biological role, plays an essential role in the initiation and regulation of chromosomal replication. ATP-DnaA binds to the origin of replication (oriC) to initiate formation of the DNA replication initiation complex once per cell cycle. Binds the DnaA box (a 9 base pair repeat at the origin) and separates the double-stranded (ds)DNA. Forms a right-handed helical filament on oriC DNA; dsDNA binds to the exterior of the filament while single-stranded (ss)DNA is stabiized in the filament's interior. The ATP-DnaA-oriC complex binds and stabilizes one strand of the AT-rich DNA unwinding element (DUE), permitting loading of DNA polymerase. After initiation quickly degrades to an ADP-DnaA complex that is not apt for DNA replication. Binds acidic phospholipids. This is Chromosomal replication initiator protein DnaA from Ehrlichia ruminantium (strain Gardel).